The primary structure comprises 717 residues: Delta-1-pyrroline-5-carboxylate synthase (717 aa).

The tract at residues 1-296 (MDAVDSTRAF…WAPVGDVGAR (296 aa)) is glutamate 5-kinase. Residues serine 60, aspartate 157, and asparagine 176 each contribute to the substrate site. ATP contacts are provided by residues 196–197 (SD) and 236–242 (RGGMTAK). Residues 297–717 (DMAVAARESS…YTHKDLTSHA (421 aa)) are gamma-glutamyl phosphate reductase.

The protein in the N-terminal section; belongs to the glutamate 5-kinase family. It in the C-terminal section; belongs to the gamma-glutamyl phosphate reductase family. In terms of tissue distribution, expressed at high levels in leaves and is inducible in roots subjected to salt stress.

It carries out the reaction L-glutamate + ATP = L-glutamyl 5-phosphate + ADP. It catalyses the reaction L-glutamate 5-semialdehyde + phosphate + NADP(+) = L-glutamyl 5-phosphate + NADPH + H(+). It participates in amino-acid biosynthesis; L-proline biosynthesis; L-glutamate 5-semialdehyde from L-glutamate: step 1/2. The protein operates within amino-acid biosynthesis; L-proline biosynthesis; L-glutamate 5-semialdehyde from L-glutamate: step 2/2. With respect to regulation, feedback regulated by proline. Functionally, P5CS plays a key role in proline biosynthesis, leading to osmoregulation in plants. In Actinidia deliciosa (Kiwi), this protein is Delta-1-pyrroline-5-carboxylate synthase.